The chain runs to 155 residues: SsrA-binding protein (155 aa).

The protein belongs to the SmpB family.

Its subcellular location is the cytoplasm. In terms of biological role, required for rescue of stalled ribosomes mediated by trans-translation. Binds to transfer-messenger RNA (tmRNA), required for stable association of tmRNA with ribosomes. tmRNA and SmpB together mimic tRNA shape, replacing the anticodon stem-loop with SmpB. tmRNA is encoded by the ssrA gene; the 2 termini fold to resemble tRNA(Ala) and it encodes a 'tag peptide', a short internal open reading frame. During trans-translation Ala-aminoacylated tmRNA acts like a tRNA, entering the A-site of stalled ribosomes, displacing the stalled mRNA. The ribosome then switches to translate the ORF on the tmRNA; the nascent peptide is terminated with the 'tag peptide' encoded by the tmRNA and targeted for degradation. The ribosome is freed to recommence translation, which seems to be the essential function of trans-translation. The chain is SsrA-binding protein from Streptococcus sanguinis (strain SK36).